Reading from the N-terminus, the 215-residue chain is Small ribosomal subunit protein uS3 (215 aa).

The KH type-2 domain maps to 39 to 109 (IRKFIKKRLE…EVLVDVKEVK (71 aa)).

This sequence belongs to the universal ribosomal protein uS3 family. In terms of assembly, part of the 30S ribosomal subunit. Forms a tight complex with proteins S10 and S14.

In terms of biological role, binds the lower part of the 30S subunit head. Binds mRNA in the 70S ribosome, positioning it for translation. The polypeptide is Small ribosomal subunit protein uS3 (Methylacidiphilum infernorum (isolate V4) (Methylokorus infernorum (strain V4))).